A 392-amino-acid polypeptide reads, in one-letter code: Cell division protein DivIB (392 aa).

The tract at residues M1–E87 is disordered. Over M1–M131 the chain is Cytoplasmic. Over residues K14 to A32 the composition is skewed to basic and acidic residues. The segment covering T58–N76 has biased composition (acidic residues). The helical transmembrane segment at W132 to L152 threads the bilayer. The POTRA domain occupies S153 to H224. Over S153 to N392 the chain is Extracellular. The segment at I368 to N392 is disordered.

It belongs to the FtsQ/DivIB family. DivIB subfamily.

It is found in the cell membrane. In terms of biological role, cell division protein that may be involved in stabilizing or promoting the assembly of the division complex. This chain is Cell division protein DivIB, found in Lactococcus lactis subsp. lactis (strain IL1403) (Streptococcus lactis).